The chain runs to 446 residues: Exodeoxyribonuclease 7 large subunit (446 aa).

The protein belongs to the XseA family. As to quaternary structure, heterooligomer composed of large and small subunits.

It localises to the cytoplasm. It catalyses the reaction Exonucleolytic cleavage in either 5'- to 3'- or 3'- to 5'-direction to yield nucleoside 5'-phosphates.. Bidirectionally degrades single-stranded DNA into large acid-insoluble oligonucleotides, which are then degraded further into small acid-soluble oligonucleotides. In Streptococcus pyogenes serotype M49 (strain NZ131), this protein is Exodeoxyribonuclease 7 large subunit.